The primary structure comprises 141 residues: Hemoglobin subunit alpha (141 aa).

The 141-residue stretch at 1–141 folds into the Globin domain; the sequence is VLSAADKTNV…VATVLTSKYR (141 aa). S3 is subject to Phosphoserine. K7 bears the N6-succinyllysine mark. The residue at position 8 (T8) is a Phosphothreonine. At K11 the chain carries N6-succinyllysine. K16 carries the N6-acetyllysine; alternate modification. Residue K16 is modified to N6-succinyllysine; alternate. Position 24 is a phosphotyrosine (Y24). The residue at position 35 (S35) is a Phosphoserine. K40 carries the N6-succinyllysine modification. S49 bears the Phosphoserine mark. An O2-binding site is contributed by H58. Position 87 (H87) interacts with heme b. S102 is subject to Phosphoserine. Phosphothreonine is present on T108. S124 carries the phosphoserine modification. Phosphothreonine is present on residues T134 and T137. S138 bears the Phosphoserine mark.

It belongs to the globin family. As to quaternary structure, heterotetramer of two alpha chains and two beta chains. In terms of tissue distribution, red blood cells.

Functionally, involved in oxygen transport from the lung to the various peripheral tissues. In terms of biological role, hemopressin acts as an antagonist peptide of the cannabinoid receptor CNR1. Hemopressin-binding efficiently blocks cannabinoid receptor CNR1 and subsequent signaling. The polypeptide is Hemoglobin subunit alpha (HBA) (Ctenodactylus gundi (Northern gundi)).